Reading from the N-terminus, the 157-residue chain is SsrA-binding protein (157 aa).

Residues 134–157 (HDKRESEKKRDWGREKGRLLRARG) are disordered. Basic and acidic residues predominate over residues 135 to 151 (DKRESEKKRDWGREKGR).

It belongs to the SmpB family.

It localises to the cytoplasm. In terms of biological role, required for rescue of stalled ribosomes mediated by trans-translation. Binds to transfer-messenger RNA (tmRNA), required for stable association of tmRNA with ribosomes. tmRNA and SmpB together mimic tRNA shape, replacing the anticodon stem-loop with SmpB. tmRNA is encoded by the ssrA gene; the 2 termini fold to resemble tRNA(Ala) and it encodes a 'tag peptide', a short internal open reading frame. During trans-translation Ala-aminoacylated tmRNA acts like a tRNA, entering the A-site of stalled ribosomes, displacing the stalled mRNA. The ribosome then switches to translate the ORF on the tmRNA; the nascent peptide is terminated with the 'tag peptide' encoded by the tmRNA and targeted for degradation. The ribosome is freed to recommence translation, which seems to be the essential function of trans-translation. The protein is SsrA-binding protein of Nitrobacter hamburgensis (strain DSM 10229 / NCIMB 13809 / X14).